Consider the following 359-residue polypeptide: NADH-quinone oxidoreductase subunit H (359 aa).

8 consecutive transmembrane segments (helical) span residues 16-36, 94-114, 128-148, 167-187, 205-225, 261-281, 296-316, and 331-351; these read IWPA…AVLA, GLFI…WAVI, GLLF…IAGW, VSYE…SGSL, GLTF…VYFI, FFLA…LLFL, IPGW…FLWV, and LGWK…GAWM.

The protein belongs to the complex I subunit 1 family. NDH-1 is composed of 14 different subunits. Subunits NuoA, H, J, K, L, M, N constitute the membrane sector of the complex.

It is found in the cell inner membrane. It carries out the reaction a quinone + NADH + 5 H(+)(in) = a quinol + NAD(+) + 4 H(+)(out). NDH-1 shuttles electrons from NADH, via FMN and iron-sulfur (Fe-S) centers, to quinones in the respiratory chain. The immediate electron acceptor for the enzyme in this species is believed to be ubiquinone. Couples the redox reaction to proton translocation (for every two electrons transferred, four hydrogen ions are translocated across the cytoplasmic membrane), and thus conserves the redox energy in a proton gradient. This subunit may bind ubiquinone. The protein is NADH-quinone oxidoreductase subunit H of Polaromonas naphthalenivorans (strain CJ2).